The following is a 443-amino-acid chain: Delta(6)-fatty-acid desaturase fat-3 (443 aa).

Residues methionine 1–aspartate 71 enclose the Cytochrome b5 heme-binding domain. 3 helical membrane-spanning segments follow: residues isoleucine 136–leucine 156, threonine 296–leucine 316, and valine 318–phenylalanine 338.

The protein belongs to the fatty acid desaturase type 1 family.

It localises to the membrane. It catalyses the reaction (9Z,12Z)-octadecadienoyl-CoA + 2 Fe(II)-[cytochrome b5] + O2 + 2 H(+) = (6Z,9Z,12Z)-octadecatrienoyl-CoA + 2 Fe(III)-[cytochrome b5] + 2 H2O. It carries out the reaction (9Z,12Z,15Z)-octadecatrienoyl-CoA + 2 Fe(II)-[cytochrome b5] + O2 + 2 H(+) = (6Z,9Z,12Z,15Z)-octadecatetraenoyl-CoA + 2 Fe(III)-[cytochrome b5] + 2 H2O. The protein operates within lipid metabolism; polyunsaturated fatty acid biosynthesis. In terms of biological role, can function as a Delta(6) fatty acid desaturase. Introduces a double bond in the fatty acid chain 6 carbons away from carboxy terminal to biosynthesize polyunsaturated fatty acids (PUFAs) endogenously (PUFAs are essential for membrane structure and many cellular and physiological processes). Acts on a variety of substrates such as linoleoyl-CoA ((9Z,12Z)-octadecadienoyl-CoA, C18:2n-6) and alpha-linolenoyl-CoA ((9Z,12Z,15Z)-octadecatrienoyl-CoA, C18:3n-3) to produce gamma-linolenoyl-CoA ((6Z,9Z,12Z)-octadecatrienoyl-CoA, C18:3n-6) and (6Z,9Z,12Z,15Z)-octadecatetraenoyl-CoA (18:4n-3) respectively. Unlike plants, Caenorhabditis elegans desaturases seem to use fatty acyl-CoAs as substrates. Plays a role in synaptic vesicle recycling by regulating synaptojanin unc-26 localization at synapses. The sequence is that of Delta(6)-fatty-acid desaturase fat-3 (fat-3) from Caenorhabditis elegans.